A 611-amino-acid polypeptide reads, in one-letter code: Elongation factor 4 (611 aa).

In terms of domain architecture, tr-type G spans 12-193 (AVIRNFCIIA…TIVAKVPAPE (182 aa)). GTP-binding positions include 24–29 (DHGKST) and 140–143 (NKID).

Belongs to the TRAFAC class translation factor GTPase superfamily. Classic translation factor GTPase family. LepA subfamily.

Its subcellular location is the cell membrane. The catalysed reaction is GTP + H2O = GDP + phosphate + H(+). Its function is as follows. Required for accurate and efficient protein synthesis under certain stress conditions. May act as a fidelity factor of the translation reaction, by catalyzing a one-codon backward translocation of tRNAs on improperly translocated ribosomes. Back-translocation proceeds from a post-translocation (POST) complex to a pre-translocation (PRE) complex, thus giving elongation factor G a second chance to translocate the tRNAs correctly. Binds to ribosomes in a GTP-dependent manner. The sequence is that of Elongation factor 4 from Cutibacterium acnes (strain DSM 16379 / KPA171202) (Propionibacterium acnes).